A 433-amino-acid polypeptide reads, in one-letter code: GPI mannosyltransferase 2 (433 aa).

The next 9 membrane-spanning stretches (helical) occupy residues 4-24 (LVKP…IISL), 109-129 (TAVI…FYLT), 148-165 (ATFT…GFFT), 172-194 (LSFL…IIPY), 204-226 (FYYT…NCIL), 247-267 (ALLF…RQQF), 322-342 (IPNF…TFYF), 354-374 (LIFI…VQII), and 410-430 (GYIY…VFFL).

This sequence belongs to the PIGV family.

The protein resides in the endoplasmic reticulum membrane. Its pathway is glycolipid biosynthesis; glycosylphosphatidylinositol-anchor biosynthesis. In terms of biological role, mannosyltransferase involved in glycosylphosphatidylinositol-anchor biosynthesis. Transfers the second mannose to the glycosylphosphatidylinositol during GPI precursor assembly. The polypeptide is GPI mannosyltransferase 2 (GPI18) (Candida glabrata (strain ATCC 2001 / BCRC 20586 / JCM 3761 / NBRC 0622 / NRRL Y-65 / CBS 138) (Yeast)).